Here is a 721-residue protein sequence, read N- to C-terminus: MPRGSEAGYCCLSRDSNMPDSRDDQQQGASLGTSQDNSQTSSLIDGQTLSKESPSHGLELSAPEKARAASLDGAEEALWTTRADGRVRLRLEPFCTQRPYTVHQMFYEALDKYGNLSALGFKRKDKWERISYYQYYLIARKVAKGFLKLGLERAHSVAILGFNSPEWFFSAVGTVFAGGIVTGIYTTSSPEACQYISHDCRANVIVVDTQKQLEKILKIWKDLPHLKAVVIYQEPPPKKMANVYTMEELIELGQEVPEEALDAIIDTQQPNQCCVLVYTSGTTGNPKGVMLSQDNITWTARYGSQAGDIQPAEVQQEVVVSYLPLSHIAAQIYDLWTGIQWGAQVCFADPDALKGTLVNTLREVEPTSHMGVPRVWEKIMERIQEVAAQSGFIRRKMLLWAMSVTLEQNLTCPSNDLKPFTSRLADYLVLARVRQALGFAKCQKNFYGAAPMTAETQRFFLGLNIRLYAGYGLSESTGPHFMSSPYNYRLYSSGRVVPGCRVKLVNQDADGIGEICLWGRTIFMGYLNMEDKTCEAIDSEGWLHTGDMGRLDADGFLYITGRLKELIITAGGENVPPVPIEEAVKMELPIISSAMLIGDQRKFLSMLLTLKCTLDPETSEPTDSLTEQAVEFCQRVGSKASTVSEIVGQRDEAVYQAIHEGIQRVNANAAARPYHIQKWAILQRDFSISGGELGPTMKLKRLTVLEKYKDIIDSFYQEQKQ.

The tract at residues 1-64 is disordered; it reads MPRGSEAGYC…SHGLELSAPE (64 aa). The span at 26–52 shows a compositional bias: polar residues; the sequence is QQGASLGTSQDNSQTSSLIDGQTLSKE. Serine 34, serine 50, serine 53, and serine 70 each carry phosphoserine. ATP contacts are provided by residues 279–287, 469–474, aspartate 547, and arginine 562; these read TSGTTGNPK and AGYGLS. The residue at position 655 (tyrosine 655) is a Phosphotyrosine. Lysine 698 lines the ATP pocket.

It belongs to the ATP-dependent AMP-binding enzyme family. Bubblegum subfamily. As to expression, mainly expressed in brain. Also expressed in adrenal gland and testis. In brain, it is present in cerebral cortical and cerebellar neurons and in steroidogenic cells of the adrenal gland, testis and ovary (at protein level).

Its subcellular location is the cytoplasm. It localises to the cytoplasmic vesicle. The protein localises to the microsome. The protein resides in the endoplasmic reticulum. It is found in the cell membrane. The enzyme catalyses a long-chain fatty acid + ATP + CoA = a long-chain fatty acyl-CoA + AMP + diphosphate. It catalyses the reaction (E)-hexadec-2-enoate + ATP + CoA = (2E)-hexadecenoyl-CoA + AMP + diphosphate. The catalysed reaction is hexadecanoate + ATP + CoA = hexadecanoyl-CoA + AMP + diphosphate. Its function is as follows. Catalyzes the conversion of fatty acids such as long-chain and very long-chain fatty acids to their active form acyl-CoAs for both synthesis of cellular lipids, and degradation via beta-oxidation. Can activate diverse saturated, monosaturated and polyunsaturated fatty acids. This chain is Long-chain-fatty-acid--CoA ligase ACSBG1, found in Mus musculus (Mouse).